A 140-amino-acid polypeptide reads, in one-letter code: Ribosome-binding factor A (140 aa).

Positions E115–G140 are disordered. Polar residues predominate over residues S128–G140.

It belongs to the RbfA family. As to quaternary structure, monomer. Binds 30S ribosomal subunits, but not 50S ribosomal subunits or 70S ribosomes.

It is found in the cytoplasm. Its function is as follows. One of several proteins that assist in the late maturation steps of the functional core of the 30S ribosomal subunit. Associates with free 30S ribosomal subunits (but not with 30S subunits that are part of 70S ribosomes or polysomes). Required for efficient processing of 16S rRNA. May interact with the 5'-terminal helix region of 16S rRNA. This is Ribosome-binding factor A from Synechococcus sp. (strain CC9605).